Here is a 142-residue protein sequence, read N- to C-terminus: Hemoglobin subunit alpha-2 (142 aa).

Residues 2 to 142 (VLSPADKTNV…VSTVLTSKYR (141 aa)) form the Globin domain. Position 59 (histidine 59) interacts with O2. A heme b-binding site is contributed by histidine 88.

The protein belongs to the globin family. Heterotetramer of two alpha chains and two beta chains. In terms of tissue distribution, red blood cells.

Its function is as follows. Involved in oxygen transport from the lung to the various peripheral tissues. In terms of biological role, hemopressin acts as an antagonist peptide of the cannabinoid receptor CNR1. Hemopressin-binding efficiently blocks cannabinoid receptor CNR1 and subsequent signaling. This chain is Hemoglobin subunit alpha-2 (HBA2), found in Hylobates lar (Lar gibbon).